The chain runs to 247 residues: Carboxy-S-adenosyl-L-methionine synthase (247 aa).

Residues tyrosine 38, 63 to 65 (GCS), asparagine 131, and arginine 198 contribute to the S-adenosyl-L-methionine site.

Belongs to the class I-like SAM-binding methyltransferase superfamily. Cx-SAM synthase family. Homodimer.

It carries out the reaction prephenate + S-adenosyl-L-methionine = carboxy-S-adenosyl-L-methionine + 3-phenylpyruvate + H2O. Its function is as follows. Catalyzes the conversion of S-adenosyl-L-methionine (SAM) to carboxy-S-adenosyl-L-methionine (Cx-SAM). The protein is Carboxy-S-adenosyl-L-methionine synthase of Desulforapulum autotrophicum (strain ATCC 43914 / DSM 3382 / VKM B-1955 / HRM2) (Desulfobacterium autotrophicum).